Here is a 178-residue protein sequence, read N- to C-terminus: Oligoribonuclease (178 aa).

In terms of domain architecture, Exonuclease spans L7–L168. Y128 is a catalytic residue.

This sequence belongs to the oligoribonuclease family.

Its subcellular location is the cytoplasm. In terms of biological role, 3'-to-5' exoribonuclease specific for small oligoribonucleotides. This Pseudomonas syringae pv. syringae (strain B728a) protein is Oligoribonuclease.